An 877-amino-acid polypeptide reads, in one-letter code: Phosphoenolpyruvate carboxylase (877 aa).

Residues H138 and K544 contribute to the active site.

Belongs to the PEPCase type 1 family. Requires Mg(2+) as cofactor.

The catalysed reaction is oxaloacetate + phosphate = phosphoenolpyruvate + hydrogencarbonate. In terms of biological role, forms oxaloacetate, a four-carbon dicarboxylic acid source for the tricarboxylic acid cycle. The sequence is that of Phosphoenolpyruvate carboxylase from Vibrio parahaemolyticus serotype O3:K6 (strain RIMD 2210633).